The chain runs to 331 residues: MINEATLAESIRRLRQGERATLAQAMTLVESRHPRHQALSTQLLDAIMPYCGNTLRLGVTGTPGAGKSTFLEAFGMLLIREGLKVAVIAVDPSSPVTGGSILGDKTRMNDLARAEAAFIRPVPSSGHLGGASQRARELMLLCEAAGYDVVIVETVGVGQSETEVARMVDCFISLQIAGGGDDLQGIKKGLMEVADLIVINKDDGDNHTNVAIARHMYESALHILRRKYDEWQPRVLTCSALEKRGIDEIWHAIIDFKTALTASGRLQQVRQQQSVEWLRKQTEEEVLNHLFANEDFDRYYRQTLLAVKNNTLSPRTGLRQLSEFIQTQYFD.

61-68 (GTPGAGKS) serves as a coordination point for ATP.

This sequence belongs to the SIMIBI class G3E GTPase family. ArgK/MeaB subfamily. As to quaternary structure, monomer. Interacts with the methylmalonyl-CoA mutase ScpA.

The enzyme catalyses GTP + H2O = GDP + phosphate + H(+). Binds and hydrolyzes GTP. Likely functions as a G-protein chaperone that assists AdoCbl cofactor delivery to the methylmalonyl-CoA mutase (MCM) ScpA and reactivation of the enzyme during catalysis. The sequence is that of GTPase ArgK (argK) from Escherichia coli (strain K12).